The following is a 294-amino-acid chain: Signal peptidase I (294 aa).

A disordered region spans residues 1-59 (MTETTDSPSERQPGPAEPELSSRDPDIAGQVFDAAPFDAAPDADSEGDSKAAKTDEPRP). Over 1 to 66 (MTETTDSPSE…PRPAKRSTLR (66 aa)) the chain is Cytoplasmic. Over residues 47-59 (GDSKAAKTDEPRP) the composition is skewed to basic and acidic residues. The chain crosses the membrane as a helical span at residues 67–87 (EFAVLAVIAVVLYYVMLTFVA). Over 88–294 (RPYLIPSESM…VRSVNPQQGR (207 aa)) the chain is Extracellular. Active-site residues include Ser96 and Lys174.

This sequence belongs to the peptidase S26 family.

Its subcellular location is the cell membrane. It catalyses the reaction Cleavage of hydrophobic, N-terminal signal or leader sequences from secreted and periplasmic proteins.. The chain is Signal peptidase I (lepB) from Mycobacterium tuberculosis (strain CDC 1551 / Oshkosh).